The following is a 207-amino-acid chain: Outer-membrane lipoprotein LolB (207 aa).

Positions 1-21 (MPMRKRHFYRLLPLASLLLAA) are cleaved as a signal peptide. A lipid anchor (N-palmitoyl cysteine) is attached at cysteine 22. Residue cysteine 22 is the site of S-diacylglycerol cysteine attachment.

This sequence belongs to the LolB family. As to quaternary structure, monomer.

It localises to the cell outer membrane. Functionally, plays a critical role in the incorporation of lipoproteins in the outer membrane after they are released by the LolA protein. In Yersinia pestis bv. Antiqua (strain Antiqua), this protein is Outer-membrane lipoprotein LolB.